Reading from the N-terminus, the 511-residue chain is Probable cytochrome P450 4ac2 (511 aa).

2 residues coordinate heme: Glu318 and Cys455.

This sequence belongs to the cytochrome P450 family. Heme is required as a cofactor.

It localises to the endoplasmic reticulum membrane. The protein resides in the microsome membrane. In terms of biological role, may be involved in the metabolism of insect hormones and in the breakdown of synthetic insecticides. The polypeptide is Probable cytochrome P450 4ac2 (Cyp4ac2) (Drosophila melanogaster (Fruit fly)).